Reading from the N-terminus, the 79-residue chain is uncharacterized protein (79 aa).

Positions 1 to 19 are cleaved as a signal peptide; the sequence is MKYVALAFVLSLVILQISA.

In terms of tissue distribution, nacreous layer of shell (at protein level). Expressed primarily in the mantle with highest level in the mantle pallium and lower level in the mantle edge.

The protein resides in the secreted. This is an uncharacterized protein from Pinctada maxima (Silver-lipped pearl oyster).